The chain runs to 608 residues: Developmental regulatory protein wetA (608 aa).

Disordered stretches follow at residues 54–88 (ADHHGHNPGMPTLADGLMLDHPSESTASASSGVST), 102–125 (VDATVPSQPGSSAAPGASHDVDPR), 146–186 (VSMS…MTRK), 202–226 (SKLRKPRKPIAMDRPGSPTMDNPPR), 309–352 (WPHQ…HAVP), 447–544 (AQTY…GDIG), and 556–576 (LMTGVAPSGSSKTKARREREA). Low complexity-rich tracts occupy residues 77–88 (ESTASASSGVST), 107–119 (PSQPGSSAAPGAS), and 163–175 (SSPGRRVPVSQPS). The span at 313–338 (QHPHPHPHPHHPQAHTHPHPHPHPHP) shows a compositional bias: basic residues. 2 stretches are compositionally biased toward low complexity: residues 339-350 (HQQAVAGHPQHA) and 502-517 (SSNGSVASARSASGRG).

The protein belongs to the wetA family.

Functionally, abaA and wetA are pivotal regulators of conidiophore development and conidium maturation. They act individually and together to regulate their own expression and that of numerous other sporulation-specific genes. Functions to maintain conidial dormancy by suppressing microcycle conidiation. The polypeptide is Developmental regulatory protein wetA (Gibberella zeae (strain ATCC MYA-4620 / CBS 123657 / FGSC 9075 / NRRL 31084 / PH-1) (Wheat head blight fungus)).